The primary structure comprises 317 residues: L-lactate dehydrogenase (317 aa).

Residues Val17, Asp38, Lys43, Tyr69, and 83–84 contribute to the NAD(+) site; that span reads GA. 2 residues coordinate substrate: Gln86 and Arg92. NAD(+) contacts are provided by residues Ser105, 122-124, and Ser147; that span reads ATN. 124-127 is a binding site for substrate; sequence NPVD. 152-155 is a substrate binding site; sequence DTAR. Beta-D-fructose 1,6-bisphosphate contacts are provided by Arg157 and His172. His179 (proton acceptor) is an active-site residue. Tyr224 is modified (phosphotyrosine). Thr233 is a binding site for substrate.

Belongs to the LDH/MDH superfamily. LDH family. In terms of assembly, homotetramer.

It localises to the cytoplasm. It carries out the reaction (S)-lactate + NAD(+) = pyruvate + NADH + H(+). It functions in the pathway fermentation; pyruvate fermentation to lactate; (S)-lactate from pyruvate: step 1/1. Allosterically activated by fructose 1,6-bisphosphate (FBP). In terms of biological role, catalyzes the conversion of lactate to pyruvate. This is L-lactate dehydrogenase from Geobacillus kaustophilus (strain HTA426).